The primary structure comprises 339 residues: Large ribosomal subunit protein uL10 (339 aa).

The tract at residues 307–339 (VEEEKKEEKVEEEKEDEEASEEEALAGLSALFG) is disordered. The segment covering 308-318 (EEEKKEEKVEE) has biased composition (basic and acidic residues). Over residues 319 to 330 (EKEDEEASEEEA) the composition is skewed to acidic residues.

Belongs to the universal ribosomal protein uL10 family. As to quaternary structure, part of the 50S ribosomal subunit. Forms part of the ribosomal stalk which helps the ribosome interact with GTP-bound translation factors. Forms a heptameric L10(L12)2(L12)2(L12)2 complex, where L10 forms an elongated spine to which the L12 dimers bind in a sequential fashion.

Its function is as follows. Forms part of the ribosomal stalk, playing a central role in the interaction of the ribosome with GTP-bound translation factors. This Pyrococcus furiosus (strain ATCC 43587 / DSM 3638 / JCM 8422 / Vc1) protein is Large ribosomal subunit protein uL10.